The primary structure comprises 183 residues: Myelin-associated oligodendrocyte basic protein (183 aa).

Residues 68-183 (TRTSRRAKSP…GSPVKASRFW (116 aa)) are disordered. The span at 69–78 (RTSRRAKSPQ) shows a compositional bias: basic residues. The segment covering 79–96 (RPKQQPAAPPAVVRAPAK) has biased composition (low complexity). 4 repeat units span residues 97 to 106 (PRSPPRSERQ), 107 to 116 (PRSPPRSERQ), 117 to 126 (PRSPPRSERQ), and 127 to 136 (PRSPPRSERQ). The segment at 97-136 (PRSPPRSERQPRSPPRSERQPRSPPRSERQPRSPPRSERQ) is 4 X 10 AA tandem repeats of P-R-S-P-P-R-S-E-R-Q. Phosphoserine occurs at positions 99 and 109. Residues 101-143 (PRSERQPRSPPRSERQPRSPPRSERQPRSPPRSERQPRPRPEV) are compositionally biased toward basic and acidic residues. The segment covering 151–164 (RPPQKSKQQPRSSP) has biased composition (low complexity).

It is found in the cytoplasm. The protein localises to the perinuclear region. May play a role in compacting or stabilizing the myelin sheath, possibly by binding the negatively charged acidic phospholipids of the cytoplasmic membrane. The polypeptide is Myelin-associated oligodendrocyte basic protein (MOBP) (Homo sapiens (Human)).